The sequence spans 485 residues: Adenosylhomocysteinase (485 aa).

Substrate-binding residues include T64, D139, and E205. T206–T208 is a binding site for NAD(+). Substrate-binding residues include K235 and D239. Residues N240, G269–G274, E292, N327, I348–H350, and N397 each bind NAD(+).

Belongs to the adenosylhomocysteinase family. Homotetramer. NAD(+) serves as cofactor.

The enzyme catalyses S-adenosyl-L-homocysteine + H2O = L-homocysteine + adenosine. The protein operates within amino-acid biosynthesis; L-homocysteine biosynthesis; L-homocysteine from S-adenosyl-L-homocysteine: step 1/1. Adenosylhomocysteine is a competitive inhibitor of S-adenosyl-L-methionine-dependent methyl transferase reactions; therefore adenosylhomocysteinase may play a key role in the control of methylations via regulation of the intracellular concentration of adenosylhomocysteine. This is Adenosylhomocysteinase (SAHH) from Catharanthus roseus (Madagascar periwinkle).